A 178-amino-acid polypeptide reads, in one-letter code: Caveolin-1 (178 aa).

S2 bears the N-acetylserine mark. The residue at position 2 (S2) is a Phosphoserine. The segment at 2–94 is required for homooligomerization; that stretch reads SGGKYVDSEG…WKASFTTFTV (93 aa). The Cytoplasmic portion of the chain corresponds to 2–104; the sequence is SGGKYVDSEG…TKYWFYRLLS (103 aa). Residue K5 is modified to N6-acetyllysine; alternate. K5 is covalently cross-linked (Glycyl lysine isopeptide (Lys-Gly) (interchain with G-Cter in ubiquitin); alternate). At Y6 the chain carries Phosphotyrosine. Position 9 is a phosphoserine (S9). Y14 is subject to Phosphotyrosine; by ABL1. Y25 carries the phosphotyrosine modification. Glycyl lysine isopeptide (Lys-Gly) (interchain with G-Cter in ubiquitin) cross-links involve residues K26 and K30. Position 37 is a phosphoserine (S37). Glycyl lysine isopeptide (Lys-Gly) (interchain with G-Cter in ubiquitin) cross-links involve residues K39, K47, and K57. An interaction with CAVIN3 region spans residues 82-94; sequence DGIWKASFTTFTV. Residues 105-125 constitute an intramembrane region (helical); the sequence is ALFGIPMALIWGIYFAILSFL. Over 126–178 the chain is Cytoplasmic; the sequence is HIWAVVPCIKSFLIEIQCISRVYSIYIHTVCDPLFEAIGKIFSNVRISLQKEI. Residues 131 to 142 form an interacts with SPRY1, SPRY2, SPRY3 and SPRY4 region; it reads VPCIKSFLIEIQ. 3 S-palmitoyl cysteine lipidation sites follow: C133, C143, and C156. The tract at residues 149 to 160 is interacts with SPRY1, SPRY2, and SPRY4; sequence SIYIHTVCDPLF. Residues 167 to 178 are interacts with SPRY1, SPRY2, SPRY3 and SPRY4; sequence FSNVRISLQKEI.

Belongs to the caveolin family. In terms of assembly, homooligomer. Interacts with GLIPR2. Interacts with NOSTRIN. Interacts with SNAP25 and STX1A. Interacts (via the N-terminus) with DPP4; the interaction is direct. Interacts with CTNNB1, CDH1 and JUP. Interacts with PACSIN2; this interaction induces membrane tubulation. Interacts with SLC7A9. Interacts with BMX and BTK. Interacts with TGFBR1. Interacts with CAVIN3 (via leucine-zipper domain) in a cholesterol-sensitive manner. Interacts with CAVIN1. Interacts with EHD2 in a cholesterol-dependent manner. Forms a ternary complex with UBXN6 and VCP; mediates CAV1 targeting to lysosomes for degradation. Interacts with ABCG1; this interaction regulates ABCG1-mediated cholesterol efflux. Interacts with NEU3; this interaction enhances NEU3 sialidase activity within caveola. Interacts (via C-terminus) with SPRY1, SPRY2 (via C-terminus), SPRY3, and SPRY4. Interacts with IGFBP5; this interaction allows trafficking of IGFBP5 from the plasma membrane to the nucleus. In terms of processing, phosphorylated at Tyr-14 by ABL1 in response to oxidative stress. Post-translationally, ubiquitinated. Undergo monoubiquitination and multi- and/or polyubiquitination. Monoubiquitination of N-terminal lysines promotes integration in a ternary complex with UBXN6 and VCP which promotes oligomeric CAV1 targeting to lysosomes for degradation. Ubiquitinated by ZNRF1; leading to degradation and modulation of the TLR4-mediated immune response.

It is found in the golgi apparatus membrane. The protein resides in the cell membrane. It localises to the membrane. Its subcellular location is the caveola. The protein localises to the membrane raft. In terms of biological role, may act as a scaffolding protein within caveolar membranes. Forms a stable heterooligomeric complex with CAV2 that targets to lipid rafts and drives caveolae formation. Mediates the recruitment of CAVIN proteins (CAVIN1/2/3/4) to the caveolae. Interacts directly with G-protein alpha subunits and can functionally regulate their activity. Involved in the costimulatory signal essential for T-cell receptor (TCR)-mediated T-cell activation. Its binding to DPP4 induces T-cell proliferation and NF-kappa-B activation in a T-cell receptor/CD3-dependent manner. Recruits CTNNB1 to caveolar membranes and may regulate CTNNB1-mediated signaling through the Wnt pathway. Negatively regulates TGFB1-mediated activation of SMAD2/3 by mediating the internalization of TGFBR1 from membrane rafts leading to its subsequent degradation. Binds 20(S)-hydroxycholesterol (20(S)-OHC). The protein is Caveolin-1 (CAV1) of Aotus nancymaae (Ma's night monkey).